A 289-amino-acid chain; its full sequence is Agamous-like MADS-box protein AGL93 (289 aa).

The 61-residue stretch at 18-78 (QTCFKKSSLS…GKLIKTWPDD (61 aa)) folds into the MADS-box domain. The segment at 151-197 (EFGQTRAVSSTTNPLSPPPSLIEDHRHQQRTEPLMSGVSNTEQDLST) is disordered. The segment covering 187-197 (GVSNTEQDLST) has biased composition (polar residues).

In terms of tissue distribution, expressed in pollen.

Its subcellular location is the nucleus. Probable transcription factor. In Arabidopsis thaliana (Mouse-ear cress), this protein is Agamous-like MADS-box protein AGL93.